The primary structure comprises 685 residues: Pentatricopeptide repeat-containing protein At5g19020, mitochondrial (685 aa).

A mitochondrion-targeting transit peptide spans 1–23 (MIKLIRFFRSRRCWVISLQARCF). PPR repeat units follow at residues 40–74 (TERA…GLDS), 75–105 (NGYI…HAKL), 106–136 (DSAS…MPER), 137–171 (SCVS…GIML), 172–206 (NEVT…KLEG), 207–237 (RVFV…MPER), 238–268 (NLVT…ITEK), 269–303 (DIVS…GMKP), 304–338 (SEVM…GFDC), 339–369 (YDFL…SVKD), 370–400 (HIAS…THDK), 401–435 (DIFS…SQVK), 437–471 (DAIT…TIPP), 472–502 (NDNL…TKNI), 506–540 (TISP…PIKP), 541–576 (NSIT…GIEP), and 577–607 (DIKH…MPVK). Residues 612–685 (IWGMLLSASR…EWSRAFSGVV (74 aa)) form a type E motif; degenerate region.

This sequence belongs to the PPR family. PCMP-E subfamily.

It localises to the mitochondrion. The polypeptide is Pentatricopeptide repeat-containing protein At5g19020, mitochondrial (PCMP-E42) (Arabidopsis thaliana (Mouse-ear cress)).